A 123-amino-acid chain; its full sequence is Small ribosomal subunit protein uS13 (123 aa).

Positions 94 to 123 (GLPVRGQSTKSNARTRKGPRKTVAGKKSTK) are disordered. Residues 106–123 (ARTRKGPRKTVAGKKSTK) are compositionally biased toward basic residues.

It belongs to the universal ribosomal protein uS13 family. Part of the 30S ribosomal subunit. Forms a loose heterodimer with protein S19. Forms two bridges to the 50S subunit in the 70S ribosome.

Located at the top of the head of the 30S subunit, it contacts several helices of the 16S rRNA. In the 70S ribosome it contacts the 23S rRNA (bridge B1a) and protein L5 of the 50S subunit (bridge B1b), connecting the 2 subunits; these bridges are implicated in subunit movement. Contacts the tRNAs in the A and P-sites. The sequence is that of Small ribosomal subunit protein uS13 from Mycoplasmopsis agalactiae (strain NCTC 10123 / CIP 59.7 / PG2) (Mycoplasma agalactiae).